Here is a 662-residue protein sequence, read N- to C-terminus: Capsid protein (662 aa).

Belongs to the anelloviridae capsid protein family.

The protein resides in the virion. Self-assembles to form an icosahedral capsid with a T=1 symmetry, about 30 nm in diameter, and consisting of 60 capsid proteins. The capsid encapsulates the genomic DNA. Capsid protein is involved in attachment and entry into the host cell. This chain is Capsid protein, found in Homo sapiens (Human).